The sequence spans 885 residues: Envelope glycoprotein B (885 aa).

An N-terminal signal peptide occupies residues methionine 1–alanine 34. Over residues alanine 29–leucine 46 the composition is skewed to low complexity. The segment at alanine 29–glycine 74 is disordered. Over alanine 35–proline 759 the chain is Virion surface. Acidic residues predominate over residues proline 47–glutamate 58. N-linked (GlcNAc...) asparagine; by host glycans are attached at residues asparagine 68 and asparagine 122. Disulfide bonds link cysteine 97-cysteine 558, cysteine 114-cysteine 514, cysteine 188-cysteine 252, cysteine 345-cysteine 393, and cysteine 581-cysteine 618. 2 involved in fusion and/or binding to host membrane regions span residues valine 154–tyrosine 160 and arginine 239–tyrosine 246. Asparagine 379 and asparagine 411 each carry an N-linked (GlcNAc...) asparagine; by host glycan. The tract at residues arginine 455–glutamate 478 is disordered. Asparagine 659 is a glycosylation site (N-linked (GlcNAc...) asparagine; by host). 2 hydrophobic membrane proximal region regions span residues isoleucine 704 to serine 757 and leucine 716 to leucine 756. A helical membrane pass occupies residues phenylalanine 760–phenylalanine 780. The Intravirion portion of the chain corresponds to arginine 781–leucine 885. The Golgi targeting motif lies at tyrosine 834 to leucine 837. Residues methionine 866–leucine 885 form a disordered region. Residues tyrosine 874 to leucine 877 carry the Internalization motif motif.

It belongs to the herpesviridae glycoprotein B family. In terms of assembly, homotrimer; disulfide-linked. Binds to heparan sulfate proteoglycans. Interacts with gH/gL heterodimer.

The protein localises to the virion membrane. Its subcellular location is the host cell membrane. It localises to the host endosome membrane. It is found in the host Golgi apparatus membrane. Its function is as follows. Envelope glycoprotein that forms spikes at the surface of virion envelope. Essential for the initial attachment to heparan sulfate moieties of the host cell surface proteoglycans. Involved in fusion of viral and cellular membranes leading to virus entry into the host cell. Following initial binding to its host receptors, membrane fusion is mediated by the fusion machinery composed at least of gB and the heterodimer gH/gL. May be involved in the fusion between the virion envelope and the outer nuclear membrane during virion egress. The chain is Envelope glycoprotein B from Herpes simplex virus type 2 (strain SA8) (Simian agent 8).